A 105-amino-acid chain; its full sequence is Nitrogenase-stabilizing/protective protein NifW 1 (105 aa).

The protein belongs to the NifW family. Homotrimer; associates with NifD.

In terms of biological role, may protect the nitrogenase Fe-Mo protein from oxidative damage. This chain is Nitrogenase-stabilizing/protective protein NifW 1, found in Trichormus variabilis (strain ATCC 29413 / PCC 7937) (Anabaena variabilis).